Reading from the N-terminus, the 779-residue chain is Phosphatidylinositol 4-phosphate 5-kinase 4 (779 aa).

Residues 20–61 form a disordered region; that stretch reads QQAKKRANSIFGTVSVAPQTDDDATTTTEENDDETSTNRSSI. Over residues 39-54 the composition is skewed to acidic residues; sequence TDDDATTTTEENDDET. MORN repeat units follow at residues 77-99, 100-122, 123-145, 146-168, 169-191, 192-214, 215-237, and 238-259; these read YTGQ…DGCM, YIGD…SGAT, YEGE…SGDT, YKGQ…NGDV, YDGE…DGSY, YMGE…DGNR, YDGF…DGSF, and YVGH…SGDD. One can recognise a PIPK domain in the interval 382–775; it reads TISKGHRNYE…RFRDFIFKVF (394 aa). Residues 735-756 are activation loop; it reads YDISKKLEHAYKSIQYDPTSIS.

It catalyses the reaction a 1,2-diacyl-sn-glycero-3-phospho-(1D-myo-inositol 4-phosphate) + ATP = a 1,2-diacyl-sn-glycero-3-phospho-(1D-myo-inositol-4,5-bisphosphate) + ADP + H(+). The polypeptide is Phosphatidylinositol 4-phosphate 5-kinase 4 (PIP5K4) (Arabidopsis thaliana (Mouse-ear cress)).